We begin with the raw amino-acid sequence, 140 residues long: Transmembrane protein 107 (140 aa).

2 helical membrane passes run 7–27 and 53–73; these read LVPSRFLTLTAHLVIVITIFW and LIIALSVTLGLFAVEYAGFLS. Asparagine 79 carries an N-linked (GlcNAc...) asparagine glycan. 2 helical membrane-spanning segments follow: residues 84 to 104 and 113 to 133; these read LLSVGAHASATVSLLFFLFEG and IMSFCSALPAVTEIIIFIAVF.

Its subcellular location is the membrane. May play a role in cilia formation and embryonic patterning. This Xenopus laevis (African clawed frog) protein is Transmembrane protein 107 (tmem107).